The chain runs to 257 residues: Lipid A 4'-phosphatase (257 aa).

6 consecutive transmembrane segments (helical) span residues 21-41 (FGAF…FRAF), 85-105 (IFFR…IECY), 119-139 (KLKV…NVIL), 174-194 (CSFV…LLFV), 201-221 (ALVP…LSFG), and 225-245 (LSDV…LLAL).

This sequence belongs to the lipid A LpxF 4'-phosphatase family.

The protein localises to the cell inner membrane. The protein operates within bacterial outer membrane biogenesis; LPS lipid A biosynthesis. Probably removes the 4'-phosphate moiety from lipid A species. Not seen to act on other membrane components, nor does it dephosphorylate the 1-phosphate group of lipid A and/or lipid A precursors. The polypeptide is Lipid A 4'-phosphatase (Rhizobium etli (strain ATCC 51251 / DSM 11541 / JCM 21823 / NBRC 15573 / CFN 42)).